A 351-amino-acid chain; its full sequence is Uroporphyrinogen decarboxylase (351 aa).

Substrate is bound by residues 25-29, Phe43, Asp74, Tyr151, Ser206, and His325; that span reads RQAGR.

Belongs to the uroporphyrinogen decarboxylase family. In terms of assembly, homodimer.

The protein resides in the cytoplasm. The catalysed reaction is uroporphyrinogen III + 4 H(+) = coproporphyrinogen III + 4 CO2. It participates in porphyrin-containing compound metabolism; protoporphyrin-IX biosynthesis; coproporphyrinogen-III from 5-aminolevulinate: step 4/4. Catalyzes the decarboxylation of four acetate groups of uroporphyrinogen-III to yield coproporphyrinogen-III. This is Uroporphyrinogen decarboxylase from Chlorobaculum tepidum (strain ATCC 49652 / DSM 12025 / NBRC 103806 / TLS) (Chlorobium tepidum).